Here is a 232-residue protein sequence, read N- to C-terminus: LexA repressor (232 aa).

The segment at residues Ile-35 to Lys-55 is a DNA-binding region (H-T-H motif). Positions Gly-61–Ser-85 are enriched in basic and acidic residues. A disordered region spans residues Gly-61–Pro-104. A compositionally biased stretch (low complexity) spans Ser-86–Ala-99. Active-site for autocatalytic cleavage activity residues include Ser-156 and Lys-193.

This sequence belongs to the peptidase S24 family. In terms of assembly, homodimer.

The enzyme catalyses Hydrolysis of Ala-|-Gly bond in repressor LexA.. In terms of biological role, represses a number of genes involved in the response to DNA damage (SOS response), including recA and lexA. In the presence of single-stranded DNA, RecA interacts with LexA causing an autocatalytic cleavage which disrupts the DNA-binding part of LexA, leading to derepression of the SOS regulon and eventually DNA repair. The protein is LexA repressor of Corynebacterium glutamicum (strain ATCC 13032 / DSM 20300 / JCM 1318 / BCRC 11384 / CCUG 27702 / LMG 3730 / NBRC 12168 / NCIMB 10025 / NRRL B-2784 / 534).